Reading from the N-terminus, the 437-residue chain is Lipid II isoglutaminyl synthase (glutamine-hydrolyzing) subunit MurT (437 aa).

4 residues coordinate Zn(2+): C202, C205, C224, and C226. D349 is a catalytic residue.

Belongs to the MurCDEF family. MurT subfamily. In terms of assembly, forms a heterodimer with GatD.

The catalysed reaction is beta-D-GlcNAc-(1-&gt;4)-Mur2Ac(oyl-L-Ala-gamma-D-Glu-L-Lys-D-Ala-D-Ala)-di-trans,octa-cis-undecaprenyl diphosphate + L-glutamine + ATP + H2O = beta-D-GlcNAc-(1-&gt;4)-Mur2Ac(oyl-L-Ala-D-isoglutaminyl-L-Lys-D-Ala-D-Ala)-di-trans,octa-cis-undecaprenyl diphosphate + L-glutamate + ADP + phosphate + H(+). It catalyses the reaction beta-D-GlcNAc-(1-&gt;4)-Mur2Ac(oyl-L-Ala-gamma-D-Glu-L-Lys-D-Ala-D-Ala)-di-trans,octa-cis-undecaprenyl diphosphate + ATP = beta-D-GlcNAc-(1-&gt;4)-Mur2Ac(oyl-L-Ala-gamma-D-O-P-Glu-L-Lys-D-Ala-D-Ala)-di-trans,octa-cis-undecaprenyl diphosphate + ADP. It carries out the reaction beta-D-GlcNAc-(1-&gt;4)-Mur2Ac(oyl-L-Ala-gamma-D-O-P-Glu-L-Lys-D-Ala-D-Ala)-di-trans,octa-cis-undecaprenyl diphosphate + NH4(+) = beta-D-GlcNAc-(1-&gt;4)-Mur2Ac(oyl-L-Ala-D-isoglutaminyl-L-Lys-D-Ala-D-Ala)-di-trans,octa-cis-undecaprenyl diphosphate + phosphate + H(+). The protein operates within cell wall biogenesis; peptidoglycan biosynthesis. Its function is as follows. The lipid II isoglutaminyl synthase complex catalyzes the formation of alpha-D-isoglutamine in the cell wall lipid II stem peptide. The MurT subunit catalyzes the ATP-dependent amidation of D-glutamate residue of lipid II, converting it to an isoglutamine residue. This is Lipid II isoglutaminyl synthase (glutamine-hydrolyzing) subunit MurT from Staphylococcus aureus (strain COL).